A 762-amino-acid polypeptide reads, in one-letter code: MAEAKCPFSQSRSNANVAGGGTRNTDWWPDQLNLGILRQHAPASNPFERDFDYTAAFNSLDYYALKKDLHALMTDSQDWWPADFGHYGGLFIRMAWHSAGTYRVFDGRGGGGQGQQRFAPLNSWPDNASLDKARRLLWPIKQKYGAKISWADLMLLAGNVALESMGFKTYGFSGGRADTWEADESVYWGGESTWMGNDVRYSDGFPGVTKHGALSGDEPPHRNIHTRDLEKPLAASHMGLIYVNPEGPDGNPDPVAAARDIRTTFGRMGMNDEETVALIAGGHSFGKTHGAASSENVDVEPAAAGLENQGLGWSNRYQSGKGPHTITSGIEVTWTKTPTKWSHAFLEYLFRFDWELTKSPGGANQWQAKNTEAIIPDAYDPSKKHLPKMLTTDLSLRYDPAYEKIARRFLDHPDEFADAFSRAWFKLLHRDMGPRTRYIGPEAPTEDLIWQDPIPAVNHTLVDANDIAALKRTILDTGLNKSNFVSTAWASASTFRGTDKRGGANGARIRLAPQRQWEVNNQPWLEETLSALEKIQKDFNDRVSSTGKKISLADLIVLAGCAAVEKAAQEAGQTITVPFTPGRMDASQEQTEVESFSHLEPVADGFRNYGKSSSRVRAEHYLVDKAHLLTLTAPEMTVLVGGLRVLNTNYDGSKHGVLTSSPGRLTNDFFTNVLDMNTAWKAKDGGRDLYEGTDRKTGQPKWTATRADLVFGSHAELRALAEVYGSSDGQEKFVKDFVSAWDKVMNLDRFDLKGSGIARSKL.

The segment at 1–22 (MAEAKCPFSQSRSNANVAGGGT) is disordered. The segment at residues 96-242 (WHSAGTYRVF…LAASHMGLIY (147 aa)) is a cross-link (tryptophyl-tyrosyl-methioninium (Trp-Tyr) (with M-268)). His97 serves as the catalytic Proton acceptor. A cross-link (tryptophyl-tyrosyl-methioninium (Tyr-Met) (with W-96)) is located at residues 242-268 (YVNPEGPDGNPDPVAAARDIRTTFGRM). His283 is a binding site for heme b.

The protein belongs to the peroxidase family. Peroxidase/catalase subfamily. In terms of assembly, homodimer or homotetramer. The cofactor is heme b. In terms of processing, formation of the three residue Trp-Tyr-Met cross-link is important for the catalase, but not the peroxidase activity of the enzyme.

Its subcellular location is the cytoplasm. The enzyme catalyses H2O2 + AH2 = A + 2 H2O. It carries out the reaction 2 H2O2 = O2 + 2 H2O. Bifunctional enzyme with both catalase and broad-spectrum peroxidase activity. The chain is Catalase-peroxidase from Aspergillus niger (strain ATCC MYA-4892 / CBS 513.88 / FGSC A1513).